The sequence spans 404 residues: Keratin, type I cuticular Ha3-I (404 aa).

Positions 1–56 are head; sequence MSYSCGLPSLSCRTSCSSRPCVPPSCHGCTLPGACNIPANVSNCNWFCEGSFNGSE. The IF rod domain occupies 56–367; it reads EKETMQFLND…SLLESEDCKL (312 aa). The segment at 57 to 91 is coil 1A; that stretch reads KETMQFLNDRLASYLEKVRQLERDNAELENLIRER. Positions 92-102 are linker 1; the sequence is SQQQEPLVCAS. A coil 1B region spans residues 103 to 203; sequence YQSYFKTIEE…HEQEVNTLRC (101 aa). The tract at residues 204-219 is linker 12; that stretch reads QLGDRLNVEVDAAPTV. The interval 220–363 is coil 2; the sequence is DLNQVLNETR…NTYRSLLESE (144 aa). The tract at residues 364–404 is tail; that stretch reads DCKLPSNPCATTNACDKSTGPCISNPCGLRARCGPCNTFGY.

It belongs to the intermediate filament family. In terms of tissue distribution, expressed in the hair follicles.

This chain is Keratin, type I cuticular Ha3-I (KRT33A), found in Homo sapiens (Human).